The following is a 324-amino-acid chain: Phospho-N-acetylmuramoyl-pentapeptide-transferase (324 aa).

10 helical membrane passes run valine 5–isoleucine 25, proline 52–methionine 72, valine 77–leucine 97, leucine 117–proline 137, leucine 147–serine 167, leucine 176–tryptophan 196, valine 203–histidine 223, valine 227–leucine 247, leucine 250–leucine 270, and valine 302–valine 322.

The protein belongs to the glycosyltransferase 4 family. MraY subfamily. Requires Mg(2+) as cofactor.

The protein resides in the cell membrane. The enzyme catalyses UDP-N-acetyl-alpha-D-muramoyl-L-alanyl-gamma-D-glutamyl-meso-2,6-diaminopimeloyl-D-alanyl-D-alanine + di-trans,octa-cis-undecaprenyl phosphate = di-trans,octa-cis-undecaprenyl diphospho-N-acetyl-alpha-D-muramoyl-L-alanyl-D-glutamyl-meso-2,6-diaminopimeloyl-D-alanyl-D-alanine + UMP. It functions in the pathway cell wall biogenesis; peptidoglycan biosynthesis. In terms of biological role, catalyzes the initial step of the lipid cycle reactions in the biosynthesis of the cell wall peptidoglycan: transfers peptidoglycan precursor phospho-MurNAc-pentapeptide from UDP-MurNAc-pentapeptide onto the lipid carrier undecaprenyl phosphate, yielding undecaprenyl-pyrophosphoryl-MurNAc-pentapeptide, known as lipid I. The chain is Phospho-N-acetylmuramoyl-pentapeptide-transferase from Bacillus licheniformis (strain ATCC 14580 / DSM 13 / JCM 2505 / CCUG 7422 / NBRC 12200 / NCIMB 9375 / NCTC 10341 / NRRL NRS-1264 / Gibson 46).